The chain runs to 210 residues: MGKGDPNKPRGKMSSYAFFVQTCREEHKKKHPDSSVNFAEFSKKCSERWKTMSAKEKSKFEDLAKSDKARYDREMKNYVPPKGDKKGKKKDPNAPKRPPSAFFLFCSEHRPKIKSEHPGLSIGDTAKKLGEMWSEQSAKDKQPYEQKAAKLKEKYEKDIAAYRAKGKSEVGKKGPGRPTGSKKKNEPEDEEEEEEEEDDEDEEEEDEDEE.

The residue at position 3 (Lys3) is an N6-acetyllysine. Positions 9–79 (PRGKMSSYAF…RYDREMKNYV (71 aa)) form a DNA-binding region, HMG box 1. Residue Cys23 is modified to Cysteine sulfonic acid (-SO3H); alternate. Cys23 and Cys45 are disulfide-bonded. Lys30 is modified (N6-acetyllysine). A Phosphoserine modification is found at Ser35. Lys43 carries the post-translational modification N6-acetyllysine. Cys45 carries the cysteine sulfonic acid (-SO3H); alternate modification. Basic and acidic residues predominate over residues 51 to 76 (TMSAKEKSKFEDLAKSDKARYDREMK). The disordered stretch occupies residues 51–102 (TMSAKEKSKFEDLAKSDKARYDREMKNYVPPKGDKKGKKKDPNAPKRPPSAF). Residue Lys90 is modified to N6-acetyllysine. Positions 95–163 (PKRPPSAFFL…KYEKDIAAYR (69 aa)) form a DNA-binding region, HMG box 2. Ser100 carries the post-translational modification Phosphoserine. A Cysteine sulfonic acid (-SO3H) modification is found at Cys106. N6-acetyllysine occurs at positions 114 and 141. Residues 162–172 (YRAKGKSEVGK) show a composition bias toward basic and acidic residues. A disordered region spans residues 162-210 (YRAKGKSEVGKKGPGRPTGSKKKNEPEDEEEEEEEEDDEDEEEEDEDEE). The required for chemotactic activity stretch occupies residues 165-180 (KGKSEVGKKGPGRPTG). Positions 187-210 (PEDEEEEEEEEDDEDEEEEDEDEE) are enriched in acidic residues.

The protein belongs to the HMGB family. Interacts with POU2F2, POU2F1 and POU3F1. Component of the RAG complex composed of core components RAG1 and RAG2, and associated component HMGB1 or HMGB2. Component of the SET complex, composed of at least ANP32A, APEX1, HMGB2, NME1, SET and TREX1. Directly interacts with SET. Interacts with LEF1. Post-translationally, reduction/oxidation of cysteine residues Cys-23, Cys-45 and Cys-106 and a possible intramolecular disulfide bond involving Cys-23 and Cys-45 give rise to different redox forms with specific functional activities in various cellular compartments: 1- fully reduced HMGB2 (HMGB2C23hC45hC106h), 2- disulfide HMGB2 (HMGB2C23-C45C106h) and 3- sulfonyl HMGB2 (HMGB2C23soC45soC106so).

It localises to the nucleus. Its subcellular location is the chromosome. The protein localises to the cytoplasm. It is found in the secreted. Its function is as follows. Multifunctional protein with various roles in different cellular compartments. May act in a redox sensitive manner. In the nucleus is an abundant chromatin-associated non-histone protein involved in transcription, chromatin remodeling and V(D)J recombination and probably other processes. Binds DNA with a preference to non-canonical DNA structures such as single-stranded DNA. Can bent DNA and enhance DNA flexibility by looping thus providing a mechanism to promote activities on various gene promoters by enhancing transcription factor binding and/or bringing distant regulatory sequences into close proximity. Involved in V(D)J recombination by acting as a cofactor of the RAG complex: acts by stimulating cleavage and RAG protein binding at the 23 bp spacer of conserved recombination signal sequences (RSS). Proposed to be involved in the innate immune response to nucleic acids by acting as a cytoplasmic promiscuous immunogenic DNA/RNA sensor which cooperates with subsequent discriminative sensing by specific pattern recognition receptors. In the extracellular compartment acts as a chemokine. Promotes proliferation and migration of endothelial cells implicating AGER/RAGE. Has antimicrobial activity in gastrointestinal epithelial tissues. Involved in inflammatory response to antigenic stimulus coupled with pro-inflammatory activity. May play a role in germ cell differentiation. Involved in modulation of neurogenesis probably by regulation of neural stem proliferation. Involved in articular cartilage surface maintenance implicating LEF1 and the Wnt/beta-catenin pathway. The polypeptide is High mobility group protein B2 (Hmgb2) (Rattus norvegicus (Rat)).